We begin with the raw amino-acid sequence, 497 residues long: Serine hydroxymethyltransferase (497 aa).

Residues leucine 176 and 180-182 each bind (6S)-5,6,7,8-tetrahydrofolate; that span reads GHL. Residue lysine 289 is modified to N6-(pyridoxal phosphate)lysine.

The protein belongs to the SHMT family. Homodimer. Pyridoxal 5'-phosphate is required as a cofactor.

It localises to the cytoplasm. It catalyses the reaction (6R)-5,10-methylene-5,6,7,8-tetrahydrofolate + glycine + H2O = (6S)-5,6,7,8-tetrahydrofolate + L-serine. Its pathway is one-carbon metabolism; tetrahydrofolate interconversion. The protein operates within amino-acid biosynthesis; glycine biosynthesis; glycine from L-serine: step 1/1. Functionally, catalyzes the reversible interconversion of serine and glycine with tetrahydrofolate (THF) serving as the one-carbon carrier. This reaction serves as the major source of one-carbon groups required for the biosynthesis of purines, thymidylate, methionine, and other important biomolecules. Also exhibits THF-independent aldolase activity toward beta-hydroxyamino acids, producing glycine and aldehydes, via a retro-aldol mechanism. This Chlamydia caviae (strain ATCC VR-813 / DSM 19441 / 03DC25 / GPIC) (Chlamydophila caviae) protein is Serine hydroxymethyltransferase.